The following is a 461-amino-acid chain: Spermidine coumaroyl-CoA acyltransferase (461 aa).

Residues His-168 and Asp-393 each act as proton acceptor in the active site.

It belongs to the plant acyltransferase family. In terms of assembly, monomer. In terms of tissue distribution, mainly expressed in roots at low levels, specifically, in the root tip.

The enzyme catalyses 2 (E)-4-coumaroyl-CoA + spermidine = N(1),N(8)-bis(coumaroyl)-spermidine + 2 CoA + 2 H(+). Its pathway is amine and polyamine metabolism; spermidine metabolism. Its function is as follows. Spermidine coumaroyl-CoA acyltransferase that mediates the conversion of spermidine into dicoumaroyl-spermidine. The protein is Spermidine coumaroyl-CoA acyltransferase of Arabidopsis thaliana (Mouse-ear cress).